We begin with the raw amino-acid sequence, 290 residues long: UPF0761 membrane protein YihY (290 aa).

The next 6 membrane-spanning stretches (helical) occupy residues 44 to 64 (LLSL…FPMF), 104 to 124 (VGAC…DSAL), 140 to 160 (FAVY…SLAI), 183 to 203 (VLPL…VPTT), 210 to 230 (AIVG…GFAL), and 244 to 264 (VLAV…IVLL).

It belongs to the UPF0761 family.

Its subcellular location is the cell inner membrane. The chain is UPF0761 membrane protein YihY from Salmonella arizonae (strain ATCC BAA-731 / CDC346-86 / RSK2980).